Reading from the N-terminus, the 481-residue chain is Putative F-box/FBD/LRR-repeat protein At5g25850 (481 aa).

An F-box domain is found at 19–69 (INRLSQLSDPLICQILSHLPIKEVVTTSVLSTRWKNIWLSVPSLELIYSIF). LRR repeat units lie at residues 123-151 (VRRV…KLFH), 173-198 (VWFP…KIDV), and 328-356 (HVTL…IVAF). The FBD domain maps to 401 to 452 (QLSFSSVPKCLLSSLQFVELNAQILRFDGEILNLAKYFLENSSILQKLTLHP).

This Arabidopsis thaliana (Mouse-ear cress) protein is Putative F-box/FBD/LRR-repeat protein At5g25850.